The following is a 190-amino-acid chain: dCTP deaminase (190 aa).

113–118 (KSTYAR) contacts dCTP. Glu-139 acts as the Proton donor/acceptor in catalysis. DCTP-binding residues include Gln-158, Tyr-172, Lys-181, and Gln-182.

The protein belongs to the dCTP deaminase family. As to quaternary structure, homotrimer.

The enzyme catalyses dCTP + H2O + H(+) = dUTP + NH4(+). The protein operates within pyrimidine metabolism; dUMP biosynthesis; dUMP from dCTP (dUTP route): step 1/2. Its function is as follows. Catalyzes the deamination of dCTP to dUTP. The polypeptide is dCTP deaminase (Chlamydia muridarum (strain MoPn / Nigg)).